The chain runs to 454 residues: uncharacterized protein (454 aa).

The N-terminal stretch at 1 to 21 (MKYKTVKSIPLFLLGSIVFTA) is a signal peptide. Cys22 is lipidated: N-palmitoyl cysteine. A lipid anchor (S-diacylglycerol cysteine) is attached at Cys22. A compositionally biased stretch (low complexity) spans 55 to 64 (ASSSSSTTTS). Residues 55 to 87 (ASSSSSTTTSNDDNNQKGYFLETNRSTGTYDPN) are disordered. Polar residues predominate over residues 65-87 (NDDNNQKGYFLETNRSTGTYDPN).

The protein resides in the cell membrane. This is an uncharacterized protein from Mycoplasma pneumoniae (strain ATCC 29342 / M129 / Subtype 1) (Mycoplasmoides pneumoniae).